The sequence spans 454 residues: tRNA modification GTPase MnmE (454 aa).

(6S)-5-formyl-5,6,7,8-tetrahydrofolate-binding residues include Arg23, Glu80, and Lys120. The region spanning 216–377 (GMKVVIAGRP…LREHLKQSMG (162 aa)) is the TrmE-type G domain. Residue Asn226 participates in K(+) binding. Residues 226–231 (NAGKSS), 245–251 (TDIAGTT), and 270–273 (DTAG) contribute to the GTP site. Ser230 contributes to the Mg(2+) binding site. Thr245, Ile247, and Thr250 together coordinate K(+). Thr251 lines the Mg(2+) pocket. Lys454 provides a ligand contact to (6S)-5-formyl-5,6,7,8-tetrahydrofolate.

It belongs to the TRAFAC class TrmE-Era-EngA-EngB-Septin-like GTPase superfamily. TrmE GTPase family. As to quaternary structure, homodimer. Heterotetramer of two MnmE and two MnmG subunits. K(+) is required as a cofactor.

Its subcellular location is the cytoplasm. In terms of biological role, exhibits a very high intrinsic GTPase hydrolysis rate. Involved in the addition of a carboxymethylaminomethyl (cmnm) group at the wobble position (U34) of certain tRNAs, forming tRNA-cmnm(5)s(2)U34. In Mannheimia succiniciproducens (strain KCTC 0769BP / MBEL55E), this protein is tRNA modification GTPase MnmE.